Here is a 255-residue protein sequence, read N- to C-terminus: Protein NEN4 (255 aa).

Positions 11-174 constitute an Exonuclease domain; that stretch reads VFFDLETNVP…DDVRMNLEVL (164 aa). Mg(2+) is bound by residues D14 and E16. The Proton donor/acceptor role is filled by H161. Position 166 (D166) interacts with Mg(2+).

Mg(2+) serves as cofactor. Expressed in the sieve elements and phloem pole pericycle cells.

It localises to the nucleus. In terms of biological role, probable exonuclease required for enuclation of sieve elements. The polypeptide is Protein NEN4 (Arabidopsis thaliana (Mouse-ear cress)).